The sequence spans 635 residues: Ligand-gated ion channel 4 (635 aa).

The first 24 residues, 1–24, serve as a signal peptide directing secretion; it reads MIICYSCLTVSILLTIKFVPCRFA. The Extracellular segment spans residues 25-324; it reads GIEHQNTKSR…IHMHRRPLFY (300 aa). N-linked (GlcNAc...) asparagine glycosylation is found at asparagine 46, asparagine 139, asparagine 177, and asparagine 225. A disulfide bond links cysteine 238 and cysteine 252. A glycan (N-linked (GlcNAc...) asparagine) is linked at asparagine 282. 3 helical membrane-spanning segments follow: residues 325 to 345, 355 to 375, and 381 to 401; these read VFNH…GFLM, MIIT…ESIP, and VPLI…ATCV. Topologically, residues 402 to 599 are cytoplasmic; it reads NVITLNMHRN…QQLASVVDRL (198 aa). Residues 600–620 traverse the membrane as a helical segment; sequence LLCLFCTATLFTIICLLIVPV. Residue asparagine 625 is glycosylated (N-linked (GlcNAc...) asparagine).

This sequence belongs to the ligand-gated ion channel (TC 1.A.9) family.

It localises to the postsynaptic cell membrane. The protein localises to the cell membrane. Functionally, possible acetylcholine receptor. This Caenorhabditis elegans protein is Ligand-gated ion channel 4 (lgc-4).